The primary structure comprises 134 residues: Rhoptry antigen protein (134 aa).

2 disordered regions span residues 21–82 and 96–134; these read MGPL…SNLK and QLDKEKPKKKKSKRKKKRDSSSDRILLEESKTFTSENEL. Polar residues predominate over residues 29–38; the sequence is KSTSAASTSD. Low complexity predominate over residues 39–54; it reads ELSGSEGPSTESTSTG. Basic and acidic residues predominate over residues 57–69; that stretch reads GEDKTTDNTYKEM. Basic residues predominate over residues 102–113; it reads PKKKKSKRKKKR. The span at 114 to 126 shows a compositional bias: basic and acidic residues; the sequence is DSSSDRILLEESK.

This chain is Rhoptry antigen protein, found in Plasmodium falciparum.